Consider the following 314-residue polypeptide: Probable 2-(5''-triphosphoribosyl)-3'-dephosphocoenzyme-A synthase (314 aa).

The protein belongs to the CitG/MdcB family.

It catalyses the reaction 3'-dephospho-CoA + ATP = 2'-(5''-triphospho-alpha-D-ribosyl)-3'-dephospho-CoA + adenine. In Photobacterium profundum (strain SS9), this protein is Probable 2-(5''-triphosphoribosyl)-3'-dephosphocoenzyme-A synthase.